The chain runs to 35 residues: Apolipophorin-3 (35 aa).

Equilibrium between a soluble monomer and a bound lipoprotein form. Apolipophorin-3 associates with lipophorin during lipid loading until each particle contains 9 or 14 molecules of apolipophorin-3. Hemolymph.

Its subcellular location is the secreted. Its function is as follows. Assists in the loading of diacylglycerol, generated from triacylglycerol stores in the fat body through the action of adipokinetic hormone, into lipophorin, the hemolymph lipoprotein. It increases the lipid carrying capacity of lipophorin by covering the expanding hydrophobic surface resulting from diacylglycerol uptake. It thus plays a critical role in the transport of lipids during flight in several species of insects. Has hemagglutinating activity towards rabbit erythrocytes. The sequence is that of Apolipophorin-3 from Heliothis virescens (Tobacco budworm moth).